An 879-amino-acid chain; its full sequence is Beta-mannosidase (879 aa).

A signal peptide spans 1–19 (MHLHLLLILALFRAGCVVA). 4 N-linked (GlcNAc...) asparagine glycosylation sites follow: Asn35, Asn77, Asn89, and Asn113. Residues Cys167 and Cys176 are joined by a disulfide bond. Residue 190–192 (WDW) coordinates substrate. 3 N-linked (GlcNAc...) asparagine glycosylation sites follow: Asn226, Asn297, and Asn302. Asn456 lines the substrate pocket. Glu457 functions as the Proton donor in the catalytic mechanism. Cystine bridges form between Cys540–Cys629, Cys732–Cys761, and Cys764–Cys769. The active-site Nucleophile is the Glu554. Asn736 carries an N-linked (GlcNAc...) asparagine glycan. N-linked (GlcNAc...) asparagine glycosylation is found at Asn803 and Asn807.

Belongs to the glycosyl hydrolase 2 family. In terms of assembly, monomer. As to expression, highest level in liver, high levels in lung, testis, skin and spleen, moderate level in thymus. Activity found in plasma, kidney, liver, spleen, pancreas, brain, testis, epididymis, heart, lung and skeletal muscle.

The protein localises to the lysosome. The catalysed reaction is Hydrolysis of terminal, non-reducing beta-D-mannose residues in beta-D-mannosides.. The protein operates within glycan metabolism; N-glycan degradation. Functionally, exoglycosidase that cleaves the single beta-linked mannose residue from the non-reducing end of all N-linked glycoprotein oligosaccharides. The polypeptide is Beta-mannosidase (Mus musculus (Mouse)).